Consider the following 202-residue polypeptide: Protein TIFY 11g (202 aa).

Residues 1 to 11 are compositionally biased toward gly residues; sequence MDAVGAAGGGA. The disordered stretch occupies residues 1–31; it reads MDAVGAAGGGAMLPAAARRGQPPQPPCMTTA. Residues 12–21 are compositionally biased toward low complexity; the sequence is MLPAAARRGQ. Residues 101–136 form the Tify domain; it reads ATAPTAPLTIVYGGQVLVFEHYTAEAAEKLVQRTQH. A Jas motif is present at residues 185–200; that stretch reads PIARKASLQRFLQKRK. Residues 187-194 carry the Nuclear localization signal motif; sequence ARKASLQR.

This sequence belongs to the TIFY/JAZ family. Ubiquitinated. Targeted for degradation by the SCF(COI1) E3 ubiquitin ligase-proteasome pathway during jasmonate signaling.

The protein resides in the nucleus. Its function is as follows. Repressor of jasmonate responses. The sequence is that of Protein TIFY 11g from Oryza sativa subsp. japonica (Rice).